Consider the following 340-residue polypeptide: Tryptophan--tRNA ligase (340 aa).

ATP contacts are provided by residues 11–13 (RPT) and 19–20 (GH). The 'HIGH' region motif lies at 12–20 (PTGKLHLGH). An L-tryptophan-binding site is contributed by Asp140. ATP contacts are provided by residues 152–154 (GND), Leu194, and 202–206 (KMSKS). The 'KMSKS' region motif lies at 202–206 (KMSKS).

The protein belongs to the class-I aminoacyl-tRNA synthetase family. In terms of assembly, homodimer.

It is found in the cytoplasm. It catalyses the reaction tRNA(Trp) + L-tryptophan + ATP = L-tryptophyl-tRNA(Trp) + AMP + diphosphate + H(+). Functionally, catalyzes the attachment of tryptophan to tRNA(Trp). This is Tryptophan--tRNA ligase from Streptococcus pyogenes serotype M1.